The following is a 214-amino-acid chain: Shikimate kinase (214 aa).

35–40 provides a ligand contact to ATP; that stretch reads GAGKST. Serine 39 contacts Mg(2+). Substrate contacts are provided by aspartate 57, arginine 81, and glycine 103. Residue arginine 141 participates in ATP binding. Arginine 160 serves as a coordination point for substrate.

The protein belongs to the shikimate kinase family. In terms of assembly, monomer. Requires Mg(2+) as cofactor.

It localises to the cytoplasm. It catalyses the reaction shikimate + ATP = 3-phosphoshikimate + ADP + H(+). Its pathway is metabolic intermediate biosynthesis; chorismate biosynthesis; chorismate from D-erythrose 4-phosphate and phosphoenolpyruvate: step 5/7. Functionally, catalyzes the specific phosphorylation of the 3-hydroxyl group of shikimic acid using ATP as a cosubstrate. The sequence is that of Shikimate kinase from Nitrobacter winogradskyi (strain ATCC 25391 / DSM 10237 / CIP 104748 / NCIMB 11846 / Nb-255).